The primary structure comprises 418 residues: Tyrosine--tRNA ligase (418 aa).

Position 34 (Y34) interacts with L-tyrosine. The short motif at 39–48 (PTADSLHLGH) is the 'HIGH' region element. L-tyrosine contacts are provided by Y169 and Q173. The 'KMSKS' region motif lies at 229-233 (KFGKS). Position 232 (K232) interacts with ATP. Positions 352 to 418 (LNIVDMLVTA…GKKKYAVLTY (67 aa)) constitute an S4 RNA-binding domain.

It belongs to the class-I aminoacyl-tRNA synthetase family. TyrS type 1 subfamily. Homodimer.

It localises to the cytoplasm. The enzyme catalyses tRNA(Tyr) + L-tyrosine + ATP = L-tyrosyl-tRNA(Tyr) + AMP + diphosphate + H(+). In terms of biological role, catalyzes the attachment of tyrosine to tRNA(Tyr) in a two-step reaction: tyrosine is first activated by ATP to form Tyr-AMP and then transferred to the acceptor end of tRNA(Tyr). The sequence is that of Tyrosine--tRNA ligase from Streptococcus equi subsp. zooepidemicus (strain H70).